The sequence spans 339 residues: Foldase protein PrsA (339 aa).

Positions 1–26 (MKHLKNNTKKFTALLFALLFSMSIAG) are cleaved as a signal peptide. Cysteine 27 carries the N-palmitoyl cysteine lipid modification. The S-diacylglycerol cysteine moiety is linked to residue cysteine 27. The PpiC domain maps to 197–287 (KPTFHAQHVL…FGYHVIKLID (91 aa)).

Belongs to the PrsA family.

It is found in the cell membrane. It carries out the reaction [protein]-peptidylproline (omega=180) = [protein]-peptidylproline (omega=0). In terms of biological role, plays a major role in protein secretion by helping the post-translocational extracellular folding of several secreted proteins. This is Foldase protein PrsA from Clostridium tetani (strain Massachusetts / E88).